We begin with the raw amino-acid sequence, 87 residues long: uncharacterized protein (87 aa).

The chain crosses the membrane as a helical span at residues 13-33; the sequence is LMIVSAVFGGIGIITTIVFVI. Residues 66–87 form a disordered region; it reads EECGGSTETSSSKPKKKAKKEV. Residues 78–87 are compositionally biased toward basic residues; the sequence is KPKKKAKKEV.

Its subcellular location is the membrane. This is an uncharacterized protein from Caenorhabditis elegans.